Reading from the N-terminus, the 113-residue chain is Nucleoid-associated protein Syncc9605_0027 (113 aa).

This sequence belongs to the YbaB/EbfC family. Homodimer.

Its subcellular location is the cytoplasm. The protein localises to the nucleoid. In terms of biological role, binds to DNA and alters its conformation. May be involved in regulation of gene expression, nucleoid organization and DNA protection. In Synechococcus sp. (strain CC9605), this protein is Nucleoid-associated protein Syncc9605_0027.